Here is a 478-residue protein sequence, read N- to C-terminus: Sodium-dependent phosphate transport protein 3 (478 aa).

N-linked (GlcNAc...) asparagine glycans are attached at residues asparagine 28, asparagine 47, asparagine 56, and asparagine 69. The next 10 membrane-spanning stretches (helical) occupy residues 98-118 (ISYG…IFGA), 130-150 (SLLT…VIVI), 183-203 (SIAG…GGLI), 211-231 (FIFY…FTVI), 273-293 (LPLW…TIII), 317-337 (LPFI…DFLL), 341-361 (LLSL…LPSL), 363-383 (AVAL…LILI), 405-425 (YASF…IISS), and 442-462 (NVFF…LIFG).

It belongs to the major facilitator superfamily. Sodium/anion cotransporter family. In terms of tissue distribution, expressed in the liver, kidney, placenta, lung and thyroid (at protein level).

It localises to the apical cell membrane. The catalysed reaction is 3 Na(+)(out) + phosphate(out) = 3 Na(+)(in) + phosphate(in). It catalyses the reaction urate(out) + n chloride(in) = urate(in) + n chloride(out). Acts as a membrane potential-dependent organic anion transporter, the transport requires a low concentration of chloride ions. Mediates chloride-dependent transport of urate. Can actively transport inorganic phosphate into cells via Na(+) cotransport. This Mus musculus (Mouse) protein is Sodium-dependent phosphate transport protein 3 (Slc17a2).